An 812-amino-acid chain; its full sequence is Probable inorganic carbon transporter subunit DabA (812 aa).

Cys-337, Asp-339, His-499, and Cys-514 together coordinate Zn(2+).

It belongs to the inorganic carbon transporter (TC 9.A.2) DabA family. Forms a complex with DabB. Zn(2+) is required as a cofactor.

It localises to the cell inner membrane. In terms of biological role, part of an energy-coupled inorganic carbon pump. This chain is Probable inorganic carbon transporter subunit DabA, found in Xanthomonas oryzae pv. oryzae (strain MAFF 311018).